The sequence spans 355 residues: Histidinol-phosphate aminotransferase (355 aa).

Lys218 carries the N6-(pyridoxal phosphate)lysine modification.

This sequence belongs to the class-II pyridoxal-phosphate-dependent aminotransferase family. Histidinol-phosphate aminotransferase subfamily. In terms of assembly, homodimer. Pyridoxal 5'-phosphate is required as a cofactor.

The enzyme catalyses L-histidinol phosphate + 2-oxoglutarate = 3-(imidazol-4-yl)-2-oxopropyl phosphate + L-glutamate. It functions in the pathway amino-acid biosynthesis; L-histidine biosynthesis; L-histidine from 5-phospho-alpha-D-ribose 1-diphosphate: step 7/9. The chain is Histidinol-phosphate aminotransferase from Chlorobaculum parvum (strain DSM 263 / NCIMB 8327) (Chlorobium vibrioforme subsp. thiosulfatophilum).